The primary structure comprises 528 residues: MREHSHGANYVSSVHWAAVLDSISELIDQCQEKEKEKKPVPEDGSIAPQIPGPRLLYEPVKETKAEILASMPARTVVDRMVARYFNALGIAPAILHSAQFLREYESFWKDPDATPFVWIGLLFSVICLAVQFQQPGEEAAEWSSLMRIRQFHDRIVQCLVLGQYTRGGPYVVETMVNYCASELCITKDTDVGPWLPLGIMVPLAVSRGYHRDPAGFPNISPFAGEMRRRVATPPNHATSSTPTSTRTPPTYHPHGPRPKSPLSSTPSPRTESTKSAAPSRDLAADAHDRPYPEILALDKDLQTIETSLPPIFRWQPLSQSFMVPGQVLMFRLWLRLAVLRLVIWLHRKYLAPAYSAAPYAYSRAACARAALEIAEFQLLLHEETRPGGQLHQMRWMQSSLMQSTFLLGMSVACYWMQLTRTALPGADQDMEMRERIRDRLRDTYPLWLRCSAVSRDAREAAERLRQLPDLQGLLPDVEGQLSAQESPGSGVPACWDIFHGTGRHARALDAVLGDMDRSRKTNADWARV.

The disordered stretch occupies residues 232–283 (TPPNHATSSTPTSTRTPPTYHPHGPRPKSPLSSTPSPRTESTKSAAPSRDLA). Residues 238-249 (TSSTPTSTRTPP) show a composition bias toward low complexity. Polar residues predominate over residues 261-276 (PLSSTPSPRTESTKSA).

Its subcellular location is the nucleus. In terms of biological role, transcription factor that regulates the expression of the gene cluster that mediates the biosynthesis of the tetramic acid Sch210972, a potential anti-HIV fungal natural product that contains a decalin core. The chain is Transcription factor cghF from Chaetomium globosum (strain ATCC 6205 / CBS 148.51 / DSM 1962 / NBRC 6347 / NRRL 1970) (Soil fungus).